The following is a 209-amino-acid chain: Large ribosomal subunit protein bL25 (209 aa).

The tract at residues 190-209 (PDASAAPVAAPAAPAKKGKK) is disordered.

It belongs to the bacterial ribosomal protein bL25 family. CTC subfamily. Part of the 50S ribosomal subunit; part of the 5S rRNA/L5/L18/L25 subcomplex. Contacts the 5S rRNA. Binds to the 5S rRNA independently of L5 and L18.

In terms of biological role, this is one of the proteins that binds to the 5S RNA in the ribosome where it forms part of the central protuberance. The protein is Large ribosomal subunit protein bL25 of Delftia acidovorans (strain DSM 14801 / SPH-1).